Consider the following 597-residue polypeptide: MSILQKLENSAAAAVKALYGTDPMEGQIQLQKTKREFKGHLTLVVFPFVKMSRKSPEATATEIGEWLLANESAVSAIEVVKGFLNLTIAPRVWLELLNEIRADINFGHKVATEDSPLVMVEYSSPNTNKPLHLGHVRNNLLGYSLSEIMKANGYRVVKTNIVNDRGIHICKSMLAWQKWGDGVTPEKAGKKGDHLIGDFYVLFDKHYKAELNSLMAEGKSKEEAEAASTLMAEAREMLRLWEAGDEKVVDLWRTMNQWVYDGFEATYKMMGVDFDKIYYESETYLVGKEEVLRGLEEGLFVKHSDGSVWADLTKDGLDEKLLLRADGTSVYMTQDIGTAKMRFNDYPINRMIYVVGNEQNYHFQVLSILLDRLGFEFGKGLVHFSYGMVELPEGKMKSREGTVVDADDLMDEMIRTAAEIAAEAGKAAEKDEEESREVARIVGLGSLKYFILKVDPRKNMTFNPKESIDFNGNTGSFVQYTYARIRSLMRRAEAAGYDIPSQLPTDLPLSEKEEALIQKVSEYAEVVSEAGRSYSPALIANYIYDLVKEYNQFYHDFSVLKEEDERIRAFRLALSEVVALTMRKGFALLGIEMPERM.

The short motif at 125-135 (PNTNKPLHLGH) is the 'HIGH' region element.

The protein belongs to the class-I aminoacyl-tRNA synthetase family. Monomer.

It is found in the cytoplasm. The catalysed reaction is tRNA(Arg) + L-arginine + ATP = L-arginyl-tRNA(Arg) + AMP + diphosphate. In Porphyromonas gingivalis (strain ATCC 33277 / DSM 20709 / CIP 103683 / JCM 12257 / NCTC 11834 / 2561), this protein is Arginine--tRNA ligase.